A 444-amino-acid chain; its full sequence is Tol-Pal system protein TolB (444 aa).

The N-terminal stretch at methionine 1–alanine 26 is a signal peptide. Positions isoleucine 281–glycine 310 are enriched in polar residues. A disordered region spans residues isoleucine 281–serine 311.

The protein belongs to the TolB family. The Tol-Pal system is composed of five core proteins: the inner membrane proteins TolA, TolQ and TolR, the periplasmic protein TolB and the outer membrane protein Pal. They form a network linking the inner and outer membranes and the peptidoglycan layer.

The protein localises to the periplasm. Its function is as follows. Part of the Tol-Pal system, which plays a role in outer membrane invagination during cell division and is important for maintaining outer membrane integrity. The protein is Tol-Pal system protein TolB of Cereibacter sphaeroides (strain ATCC 17029 / ATH 2.4.9) (Rhodobacter sphaeroides).